We begin with the raw amino-acid sequence, 429 residues long: tRNA modification GTPase MnmE (429 aa).

Residues arginine 20, glutamate 77, and arginine 117 each contribute to the (6S)-5-formyl-5,6,7,8-tetrahydrofolate site. In terms of domain architecture, TrmE-type G spans glycine 213 to serine 353. K(+) is bound at residue asparagine 223. Residues asparagine 223–serine 228, serine 242–threonine 248, and aspartate 267–glycine 270 each bind GTP. Serine 227 contributes to the Mg(2+) binding site. Residues serine 242, isoleucine 244, and threonine 247 each coordinate K(+). Threonine 248 is a binding site for Mg(2+). Residue lysine 429 coordinates (6S)-5-formyl-5,6,7,8-tetrahydrofolate.

Belongs to the TRAFAC class TrmE-Era-EngA-EngB-Septin-like GTPase superfamily. TrmE GTPase family. As to quaternary structure, homodimer. Heterotetramer of two MnmE and two MnmG subunits. The cofactor is K(+).

It is found in the cytoplasm. In terms of biological role, exhibits a very high intrinsic GTPase hydrolysis rate. Involved in the addition of a carboxymethylaminomethyl (cmnm) group at the wobble position (U34) of certain tRNAs, forming tRNA-cmnm(5)s(2)U34. This is tRNA modification GTPase MnmE from Dinoroseobacter shibae (strain DSM 16493 / NCIMB 14021 / DFL 12).